The chain runs to 122 residues: MVSFMTRLNVADNTGAKQVGIIKVLGATYKRYAFLGDVVVVSVKDAIPNGMVKKGQVLRAVIVRTKKGQQRQDGTHLKFHDNACVLIKEDKSPRGTRIFGPVARELREKGYNKILSLAVEVV.

It belongs to the universal ribosomal protein uL14 family. Part of the 50S ribosomal subunit. Forms a cluster with proteins L3 and L19. In the 70S ribosome, L14 and L19 interact and together make contacts with the 16S rRNA in bridges B5 and B8.

In terms of biological role, binds to 23S rRNA. Forms part of two intersubunit bridges in the 70S ribosome. The sequence is that of Large ribosomal subunit protein uL14 from Mycoplasma genitalium (strain ATCC 33530 / DSM 19775 / NCTC 10195 / G37) (Mycoplasmoides genitalium).